The primary structure comprises 482 residues: Dual specificity protein phosphatase 10 (482 aa).

Residues 168-285 (PSQGPVIIDC…FKQNHENLCD (118 aa)) form the Rhodanese domain. The interaction with MAP kinases stretch occupies residues 199 to 215 (KISRRRLQQGKITVLDL). The region spanning 321–464 (ELTPILPFLF…LLEFEEDLNN (144 aa)) is the Tyrosine-protein phosphatase domain. Cysteine 408 (phosphocysteine intermediate) is an active-site residue.

The protein belongs to the protein-tyrosine phosphatase family. Non-receptor class dual specificity subfamily. Monomer. Interacts with MAPK14.

It localises to the cytoplasm. It is found in the nucleus. It carries out the reaction O-phospho-L-tyrosyl-[protein] + H2O = L-tyrosyl-[protein] + phosphate. The catalysed reaction is O-phospho-L-seryl-[protein] + H2O = L-seryl-[protein] + phosphate. The enzyme catalyses O-phospho-L-threonyl-[protein] + H2O = L-threonyl-[protein] + phosphate. In terms of biological role, protein phosphatase involved in the inactivation of MAP kinases. Has a specificity for the MAPK11/MAPK12/MAPK13/MAPK14 subfamily. It preferably dephosphorylates p38. This chain is Dual specificity protein phosphatase 10 (DUSP10), found in Bos taurus (Bovine).